The primary structure comprises 268 residues: Tryptophan synthase alpha chain (268 aa).

Catalysis depends on proton acceptor residues E49 and D60.

It belongs to the TrpA family. As to quaternary structure, tetramer of two alpha and two beta chains.

It catalyses the reaction (1S,2R)-1-C-(indol-3-yl)glycerol 3-phosphate + L-serine = D-glyceraldehyde 3-phosphate + L-tryptophan + H2O. It participates in amino-acid biosynthesis; L-tryptophan biosynthesis; L-tryptophan from chorismate: step 5/5. Its function is as follows. The alpha subunit is responsible for the aldol cleavage of indoleglycerol phosphate to indole and glyceraldehyde 3-phosphate. The chain is Tryptophan synthase alpha chain from Pseudomonas paraeruginosa (strain DSM 24068 / PA7) (Pseudomonas aeruginosa (strain PA7)).